The chain runs to 209 residues: Pyrrolidone-carboxylate peptidase (209 aa).

Residues Glu-79, Cys-142, and His-164 contribute to the active site.

The protein belongs to the peptidase C15 family. In terms of assembly, homotetramer.

It localises to the cytoplasm. The catalysed reaction is Release of an N-terminal pyroglutamyl group from a polypeptide, the second amino acid generally not being Pro.. Its function is as follows. Removes 5-oxoproline from various penultimate amino acid residues except L-proline. The chain is Pyrrolidone-carboxylate peptidase from Saccharolobus islandicus (strain Y.N.15.51 / Yellowstone #2) (Sulfolobus islandicus).